The primary structure comprises 455 residues: Fumarate hydratase class II (455 aa).

Residues 96 to 98, 122 to 125, 132 to 134, and threonine 180 contribute to the substrate site; these read SGT, HPND, and SSN. Histidine 181 acts as the Proton donor/acceptor in catalysis. Serine 311 is an active-site residue. Substrate is bound by residues serine 312 and 317–319; that span reads KVN.

The protein belongs to the class-II fumarase/aspartase family. Fumarase subfamily. As to quaternary structure, homotetramer.

Its subcellular location is the cytoplasm. The catalysed reaction is (S)-malate = fumarate + H2O. The protein operates within carbohydrate metabolism; tricarboxylic acid cycle; (S)-malate from fumarate: step 1/1. Functionally, involved in the TCA cycle. Catalyzes the stereospecific interconversion of fumarate to L-malate. This is Fumarate hydratase class II from Listeria monocytogenes serotype 4b (strain F2365).